A 201-amino-acid polypeptide reads, in one-letter code: FMN-dependent NADH:quinone oxidoreductase (201 aa).

Residues Ser-9 and 16–18 (SYS) contribute to the FMN site.

This sequence belongs to the azoreductase type 1 family. Homodimer. Requires FMN as cofactor.

The enzyme catalyses 2 a quinone + NADH + H(+) = 2 a 1,4-benzosemiquinone + NAD(+). It carries out the reaction N,N-dimethyl-1,4-phenylenediamine + anthranilate + 2 NAD(+) = 2-(4-dimethylaminophenyl)diazenylbenzoate + 2 NADH + 2 H(+). Functionally, quinone reductase that provides resistance to thiol-specific stress caused by electrophilic quinones. Also exhibits azoreductase activity. Catalyzes the reductive cleavage of the azo bond in aromatic azo compounds to the corresponding amines. The protein is FMN-dependent NADH:quinone oxidoreductase of Mesomycoplasma hyopneumoniae (strain J / ATCC 25934 / NCTC 10110) (Mycoplasma hyopneumoniae).